Reading from the N-terminus, the 175-residue chain is Bifunctional protein PyrR (175 aa).

The PRPP-binding motif lies at 98-110 (VIIIDDVLYTGRT).

Belongs to the purine/pyrimidine phosphoribosyltransferase family. PyrR subfamily. Homodimer and homohexamer; in equilibrium.

The catalysed reaction is UMP + diphosphate = 5-phospho-alpha-D-ribose 1-diphosphate + uracil. Regulates transcriptional attenuation of the pyrimidine nucleotide (pyr) operon by binding in a uridine-dependent manner to specific sites on pyr mRNA. This disrupts an antiterminator hairpin in the RNA and favors formation of a downstream transcription terminator, leading to a reduced expression of downstream genes. Functionally, also displays a weak uracil phosphoribosyltransferase activity which is not physiologically significant. This is Bifunctional protein PyrR from Staphylococcus aureus (strain bovine RF122 / ET3-1).